Here is a 374-residue protein sequence, read N- to C-terminus: Putative F-box protein At5g60060 (374 aa).

An F-box domain is found at 9–61 (SQWSDLPLDILELISDRLDHDSSDTIHLLCLRSVCATWRLSLPLSNKNNRLSK).

In Arabidopsis thaliana (Mouse-ear cress), this protein is Putative F-box protein At5g60060.